A 460-amino-acid chain; its full sequence is UDP-N-acetylmuramoylalanine--D-glutamate ligase (460 aa).

Position 120-126 (120-126 (GSNGKTT)) interacts with ATP.

Belongs to the MurCDEF family.

It is found in the cytoplasm. The catalysed reaction is UDP-N-acetyl-alpha-D-muramoyl-L-alanine + D-glutamate + ATP = UDP-N-acetyl-alpha-D-muramoyl-L-alanyl-D-glutamate + ADP + phosphate + H(+). Its pathway is cell wall biogenesis; peptidoglycan biosynthesis. Cell wall formation. Catalyzes the addition of glutamate to the nucleotide precursor UDP-N-acetylmuramoyl-L-alanine (UMA). This chain is UDP-N-acetylmuramoylalanine--D-glutamate ligase, found in Lactobacillus delbrueckii subsp. bulgaricus (strain ATCC BAA-365 / Lb-18).